The following is a 162-amino-acid chain: HTH-type transcriptional regulator IscR (162 aa).

The HTH rrf2-type domain maps to 2-131 (RLTSKGRYAV…NNITLGELVN (130 aa)). A DNA-binding region (H-T-H motif) is located at residues 28 to 51 (LADISERQGISLSYLEQLFSRLRK). 3 residues coordinate [2Fe-2S] cluster: cysteine 92, cysteine 98, and cysteine 104.

Requires [2Fe-2S] cluster as cofactor.

Regulates the transcription of several operons and genes involved in the biogenesis of Fe-S clusters and Fe-S-containing proteins. This Shigella sonnei (strain Ss046) protein is HTH-type transcriptional regulator IscR.